The sequence spans 140 residues: Large ribosomal subunit protein uL14 (140 aa).

Belongs to the universal ribosomal protein uL14 family. In terms of assembly, component of the large ribosomal subunit.

The protein resides in the cytoplasm. Functionally, component of the large ribosomal subunit. The ribosome is a large ribonucleoprotein complex responsible for the synthesis of proteins in the cell. The chain is Large ribosomal subunit protein uL14 (rpl23) from Danio rerio (Zebrafish).